The sequence spans 150 residues: Nucleoside diphosphate kinase (150 aa).

ATP contacts are provided by K9, F57, R85, T91, R102, and N112. The active-site Pros-phosphohistidine intermediate is the H115.

The protein belongs to the NDK family. As to quaternary structure, homotetramer. Mg(2+) serves as cofactor.

Its subcellular location is the cytoplasm. It carries out the reaction a 2'-deoxyribonucleoside 5'-diphosphate + ATP = a 2'-deoxyribonucleoside 5'-triphosphate + ADP. The catalysed reaction is a ribonucleoside 5'-diphosphate + ATP = a ribonucleoside 5'-triphosphate + ADP. Functionally, major role in the synthesis of nucleoside triphosphates other than ATP. The ATP gamma phosphate is transferred to the NDP beta phosphate via a ping-pong mechanism, using a phosphorylated active-site intermediate. This Symbiobacterium thermophilum (strain DSM 24528 / JCM 14929 / IAM 14863 / T) protein is Nucleoside diphosphate kinase.